We begin with the raw amino-acid sequence, 300 residues long: tRNA dimethylallyltransferase (300 aa).

ATP is bound at residue 11 to 18; the sequence is GPTAVGKS. Residue 13–18 coordinates substrate; it reads TAVGKS. Residues 35–38 are interaction with substrate tRNA; it reads DSIQ.

Belongs to the IPP transferase family. As to quaternary structure, monomer. Mg(2+) serves as cofactor.

It catalyses the reaction adenosine(37) in tRNA + dimethylallyl diphosphate = N(6)-dimethylallyladenosine(37) in tRNA + diphosphate. Catalyzes the transfer of a dimethylallyl group onto the adenine at position 37 in tRNAs that read codons beginning with uridine, leading to the formation of N6-(dimethylallyl)adenosine (i(6)A). The polypeptide is tRNA dimethylallyltransferase (Borrelia turicatae (strain 91E135)).